The sequence spans 320 residues: ATP-dependent 6-phosphofructokinase (320 aa).

Glycine 11 is a binding site for ATP. Residue 21 to 25 participates in ADP binding; sequence RAVTK. ATP-binding positions include 72–73 and 102–105; these read RF and GDGS. Aspartate 103 is a binding site for Mg(2+). A substrate-binding site is contributed by 125–127; that stretch reads TID. The active-site Proton acceptor is the aspartate 127. Arginine 154 serves as a coordination point for ADP. Substrate is bound by residues arginine 162 and 169 to 171; that span reads MGR. ADP contacts are provided by residues 185-187 and 213-215; these read GAD and KDH. Residues glutamate 222, arginine 243, and 249–252 contribute to the substrate site; that span reads HMQR.

The protein belongs to the phosphofructokinase type A (PFKA) family. ATP-dependent PFK group I subfamily. Prokaryotic clade 'B1' sub-subfamily. Homotetramer. Mg(2+) is required as a cofactor.

The protein localises to the cytoplasm. The enzyme catalyses beta-D-fructose 6-phosphate + ATP = beta-D-fructose 1,6-bisphosphate + ADP + H(+). Its pathway is carbohydrate degradation; glycolysis; D-glyceraldehyde 3-phosphate and glycerone phosphate from D-glucose: step 3/4. Its activity is regulated as follows. Allosterically activated by ADP and other diphosphonucleosides, and allosterically inhibited by phosphoenolpyruvate. Catalyzes the phosphorylation of D-fructose 6-phosphate to fructose 1,6-bisphosphate by ATP, the first committing step of glycolysis. This chain is ATP-dependent 6-phosphofructokinase, found in Lactobacillus acidophilus (strain ATCC 700396 / NCK56 / N2 / NCFM).